The sequence spans 23 residues: Basic phospholipase A2 CB2 (23 aa).

Requires Ca(2+) as cofactor. In terms of processing, contains 7 disulfide bonds. In terms of tissue distribution, expressed by the venom gland.

It is found in the secreted. It carries out the reaction a 1,2-diacyl-sn-glycero-3-phosphocholine + H2O = a 1-acyl-sn-glycero-3-phosphocholine + a fatty acid + H(+). In terms of biological role, snake venom phospholipase A2 (PLA2) that shows presynaptic neurotoxicity. PLA2 catalyzes the calcium-dependent hydrolysis of the 2-acyl groups in 3-sn-phosphoglycerides. The protein is Basic phospholipase A2 CB2 of Crotalus durissus cumanensis (South American rattlesnake).